Here is a 212-residue protein sequence, read N- to C-terminus: ATP-dependent Clp protease proteolytic subunit (212 aa).

The Nucleophile role is filled by serine 112. The active site involves histidine 137.

It belongs to the peptidase S14 family. As to quaternary structure, fourteen ClpP subunits assemble into 2 heptameric rings which stack back to back to give a disk-like structure with a central cavity, resembling the structure of eukaryotic proteasomes.

The protein localises to the cytoplasm. The catalysed reaction is Hydrolysis of proteins to small peptides in the presence of ATP and magnesium. alpha-casein is the usual test substrate. In the absence of ATP, only oligopeptides shorter than five residues are hydrolyzed (such as succinyl-Leu-Tyr-|-NHMec, and Leu-Tyr-Leu-|-Tyr-Trp, in which cleavage of the -Tyr-|-Leu- and -Tyr-|-Trp bonds also occurs).. Cleaves peptides in various proteins in a process that requires ATP hydrolysis. Has a chymotrypsin-like activity. Plays a major role in the degradation of misfolded proteins. In Thiobacillus denitrificans (strain ATCC 25259 / T1), this protein is ATP-dependent Clp protease proteolytic subunit.